Here is a 397-residue protein sequence, read N- to C-terminus: tRNA(Ile)-lysidine synthase (397 aa).

Residue 44–49 participates in ATP binding; the sequence is SGGADS.

Belongs to the tRNA(Ile)-lysidine synthase family.

Its subcellular location is the cytoplasm. It catalyses the reaction cytidine(34) in tRNA(Ile2) + L-lysine + ATP = lysidine(34) in tRNA(Ile2) + AMP + diphosphate + H(+). Its function is as follows. Ligates lysine onto the cytidine present at position 34 of the AUA codon-specific tRNA(Ile) that contains the anticodon CAU, in an ATP-dependent manner. Cytidine is converted to lysidine, thus changing the amino acid specificity of the tRNA from methionine to isoleucine. This Rhodopirellula baltica (strain DSM 10527 / NCIMB 13988 / SH1) protein is tRNA(Ile)-lysidine synthase.